A 138-amino-acid polypeptide reads, in one-letter code: Acidic phospholipase A2 jerdoxin (138 aa).

The signal sequence occupies residues 1–16 (MRTLWIMAVLLVGVEG). Disulfide bonds link C42–C131, C44–C60, C59–C111, C65–C138, C66–C104, C73–C97, and C91–C102. The Ca(2+) site is built by Y43, G45, and G47. Residue H63 is part of the active site. D64 serves as a coordination point for Ca(2+). D105 is an active-site residue.

Belongs to the phospholipase A2 family. Group II subfamily. D49 sub-subfamily. In terms of assembly, monomer. It depends on Ca(2+) as a cofactor. Expressed by the venom gland.

The protein resides in the secreted. The catalysed reaction is a 1,2-diacyl-sn-glycero-3-phosphocholine + H2O = a 1-acyl-sn-glycero-3-phosphocholine + a fatty acid + H(+). Snake venom phospholipase A2 (PLA2) that displays edema-inducing activities, exhibits indirect hemolytic activity, and inhibits ADP-induced platelet aggregation. PLA2 catalyzes the calcium-dependent hydrolysis of the 2-acyl groups in 3-sn-phosphoglycerides. This is Acidic phospholipase A2 jerdoxin from Protobothrops jerdonii (Jerdon's pitviper).